A 679-amino-acid chain; its full sequence is Methionine--tRNA ligase (679 aa).

A 'HIGH' region motif is present at residues 14–24 (PYANGSIHLGH). Residues Cys145, Cys148, Cys158, and Cys161 each contribute to the Zn(2+) site. The 'KMSKS' region motif lies at 331-335 (KMSKS). Lys334 provides a ligand contact to ATP. A tRNA-binding domain is found at 577 to 679 (AFAAVDLRIA…SGAKPGQRVK (103 aa)).

This sequence belongs to the class-I aminoacyl-tRNA synthetase family. MetG type 1 subfamily. Homodimer. Requires Zn(2+) as cofactor.

The protein resides in the cytoplasm. It catalyses the reaction tRNA(Met) + L-methionine + ATP = L-methionyl-tRNA(Met) + AMP + diphosphate. Functionally, is required not only for elongation of protein synthesis but also for the initiation of all mRNA translation through initiator tRNA(fMet) aminoacylation. In Pseudomonas paraeruginosa (strain DSM 24068 / PA7) (Pseudomonas aeruginosa (strain PA7)), this protein is Methionine--tRNA ligase.